Here is a 503-residue protein sequence, read N- to C-terminus: Cytochrome c-552 (503 aa).

Residues 1–16 form the signal peptide; it reads MKKNTIILVGALIAIA. Heme c is bound at residue histidine 102. Cysteine 130, cysteine 133, and lysine 134 together coordinate heme. 6 residues coordinate heme c: cysteine 168, cysteine 171, histidine 172, cysteine 210, cysteine 213, and histidine 214. Ca(2+) is bound by residues glutamate 216, tyrosine 217, lysine 273, and glutamine 275. Tyrosine 217 contacts substrate. Histidine 276 contacts substrate. Heme c-binding residues include histidine 287, cysteine 294, cysteine 297, histidine 298, histidine 312, cysteine 325, cysteine 328, histidine 329, and histidine 404.

The protein belongs to the cytochrome c-552 family. It depends on Ca(2+) as a cofactor. Requires heme c as cofactor.

The protein resides in the periplasm. The catalysed reaction is 6 Fe(III)-[cytochrome c] + NH4(+) + 2 H2O = 6 Fe(II)-[cytochrome c] + nitrite + 8 H(+). It functions in the pathway nitrogen metabolism; nitrate reduction (assimilation). Functionally, catalyzes the reduction of nitrite to ammonia, consuming six electrons in the process. This chain is Cytochrome c-552, found in Maridesulfovibrio salexigens (strain ATCC 14822 / DSM 2638 / NCIMB 8403 / VKM B-1763) (Desulfovibrio salexigens).